Consider the following 548-residue polypeptide: Chaperonin GroEL (548 aa).

Residues 30-33, Lys51, 87-91, Gly415, and Asp496 each bind ATP; these read TLGP and DGTTT.

Belongs to the chaperonin (HSP60) family. As to quaternary structure, forms a cylinder of 14 subunits composed of two heptameric rings stacked back-to-back. Interacts with the co-chaperonin GroES.

The protein localises to the cytoplasm. It catalyses the reaction ATP + H2O + a folded polypeptide = ADP + phosphate + an unfolded polypeptide.. Together with its co-chaperonin GroES, plays an essential role in assisting protein folding. The GroEL-GroES system forms a nano-cage that allows encapsulation of the non-native substrate proteins and provides a physical environment optimized to promote and accelerate protein folding. This is Chaperonin GroEL from Haemophilus influenzae (strain PittGG).